The sequence spans 556 residues: MSVSAFNRRWAAVILEALTRHGVRHICIAPGSRSTPLTLAAAENSAFIHHTHFDERGLGHLALGLAKVSKQPVAVIVTSGTAVANLYPALIEAGLTGEKLILLTADRPPELIDCGANQAIRQPGMFASHPTHSISLPRPTQDIPARWLVSTIDHALGTLHAGGVHINCPFAEPLYGEMDDTGLSWQQRLGDWWQDDKPWLREAPRLESEKQRDWFFWRQKRGVVVAGRMSAEEGKKVALWAQTLGWPLIGDVLSQTGQPLPCADLWLGNAKATSELQQTQIVVQLGSSLTGKRLLQWQASCEPEEYWIVDDIEGRLDPAHHRGRRLIANIADWLELHPAEKRQPWCVEIPRLAEQAMQAVIARRDAFGEAQLAHRISDYLPEQGQLFVGNSLVVRLIDALSQLPAGYPVYSNRGASGIDGLLSTAAGVQRASGKPTLAIVGDLSALYDLNALALLRQVSAPLVLIVVNNNGGQIFSLLPTPKNERERFYLMPQNVHFEHAAAMFELKYHRPQNWQELETALVDAWRTPTTTVIEMVVNDTDGAQTLQQLLAQVSHL.

The protein belongs to the TPP enzyme family. MenD subfamily. As to quaternary structure, homodimer. Mg(2+) serves as cofactor. Mn(2+) is required as a cofactor. It depends on thiamine diphosphate as a cofactor.

It catalyses the reaction isochorismate + 2-oxoglutarate + H(+) = 5-enolpyruvoyl-6-hydroxy-2-succinyl-cyclohex-3-ene-1-carboxylate + CO2. It participates in quinol/quinone metabolism; 1,4-dihydroxy-2-naphthoate biosynthesis; 1,4-dihydroxy-2-naphthoate from chorismate: step 2/7. Its pathway is quinol/quinone metabolism; menaquinone biosynthesis. Catalyzes the thiamine diphosphate-dependent decarboxylation of 2-oxoglutarate and the subsequent addition of the resulting succinic semialdehyde-thiamine pyrophosphate anion to isochorismate to yield 2-succinyl-5-enolpyruvyl-6-hydroxy-3-cyclohexene-1-carboxylate (SEPHCHC). The polypeptide is 2-succinyl-5-enolpyruvyl-6-hydroxy-3-cyclohexene-1-carboxylate synthase (Escherichia coli O7:K1 (strain IAI39 / ExPEC)).